Reading from the N-terminus, the 37-residue chain is Cytochrome b6-f complex subunit 5 (37 aa).

The helical transmembrane segment at 5-25 (FLFGIVLGLIPITLAGLFVTA) threads the bilayer.

The protein belongs to the PetG family. The 4 large subunits of the cytochrome b6-f complex are cytochrome b6, subunit IV (17 kDa polypeptide, PetD), cytochrome f and the Rieske protein, while the 4 small subunits are PetG, PetL, PetM and PetN. The complex functions as a dimer.

The protein resides in the plastid thylakoid membrane. Its function is as follows. Component of the cytochrome b6-f complex, which mediates electron transfer between photosystem II (PSII) and photosystem I (PSI), cyclic electron flow around PSI, and state transitions. PetG is required for either the stability or assembly of the cytochrome b6-f complex. The polypeptide is Cytochrome b6-f complex subunit 5 (Cuscuta reflexa (Southern Asian dodder)).